The chain runs to 169 residues: TPD1 protein homolog 1B (169 aa).

Residues 1 to 25 (MADCTTMRLASSVTIILLLLVASQA) form the signal peptide.

Expressed in roots, and at low levels in anthers during meiosis.

Functionally, may play a role during anther development. The sequence is that of TPD1 protein homolog 1B from Oryza sativa subsp. japonica (Rice).